The following is a 132-amino-acid chain: Protein S100-A9 (132 aa).

S-nitrosocysteine is present on Cys3. His20 contacts Zn(2+). Ser23 contributes to the Ca(2+) binding site. 2 EF-hand domains span residues 26-61 (VGPR…AIND) and 54-89 (RDEK…LVHA). Asp30 contributes to the Zn(2+) binding site. Residues Glu36, Asp67, Asn69, Asp71, Gln73, and Glu78 each coordinate Ca(2+). Zn(2+) contacts are provided by His91 and His95. Positions 92–106 (EEMHKNAPHDHEGHS) are enriched in basic and acidic residues. The disordered stretch occupies residues 92-132 (EEMHKNAPHDHEGHSHGPGLGGGGPGHGHGHSHGHGHGHSH). Position 107 is a pros-methylhistidine (His107). Positions 107–118 (HGPGLGGGGPGH) are enriched in gly residues. Repeat copies occupy residues 117 to 124 (GHGHGHSH) and 125 to 132 (GHGHGHSH). Residues 117–132 (GHGHGHSHGHGHGHSH) form a 2 X 8 AA tandem repeats of G-H-G-H-G-H-S-H region. Residues 119-132 (GHGHSHGHGHGHSH) show a composition bias toward basic residues.

It belongs to the S-100 family. Homodimer. Preferentially exists as a heterodimer or heterotetramer with S100A8 known as calprotectin (S100A8/A9). S100A9 interacts with ATP2A2. S100A9 interacts with AGER, and with the heterodimeric complex formed by TLR4 and LY96 in the presence of calcium and/or zinc ions. S100A9 binds quinoline-3-carboxamides in the presence of calcium and/or zinc ions. S100A9 interacts with amyloid-beta protein 40. Calprotectin (S100A8/9) interacts with CEACAM3 and tubulin filaments in a calcium-dependent manner. Heterotetrameric calprotectin (S100A8/A9) interacts with ANXA6 and associates with tubulin filaments in activated monocytes. Calprotectin (S100A8/9) interacts with NCF2/P67PHOX, RAC1, RAC2, CYBA and CYBB. Calprotectin (S100A8/9) interacts with NOS2 to form the iNOS-S100A8/A9 transnitrosylase complex; induced by LDL(ox). Calprotectin (S100A8/9) interacts with CD69. In terms of processing, phosphorylated. Phosphorylation inhibits activation of tubulin polymerization. Methylation at His-107 by METTL9 reduces zinc-binding without affecting heterodimerization with S100A8.

Its subcellular location is the secreted. It localises to the cytoplasm. It is found in the cytoskeleton. The protein resides in the cell membrane. In terms of biological role, S100A9 is a calcium- and zinc-binding protein which plays a prominent role in the regulation of inflammatory processes and immune response. It can induce neutrophil chemotaxis, adhesion, can increase the bactericidal activity of neutrophils by promoting phagocytosis via activation of SYK, PI3K/AKT, and ERK1/2 and can induce degranulation of neutrophils by a MAPK-dependent mechanism. Predominantly found as calprotectin (S100A8/A9) which has a wide plethora of intra- and extracellular functions. The intracellular functions include: facilitating leukocyte arachidonic acid trafficking and metabolism, modulation of the tubulin-dependent cytoskeleton during migration of phagocytes and activation of the neutrophilic NADPH-oxidase. Also participates in regulatory T-cell differentiation together with CD69. Activates NADPH-oxidase by facilitating the enzyme complex assembly at the cell membrane, transferring arachidonic acid, an essential cofactor, to the enzyme complex and S100A8 contributes to the enzyme assembly by directly binding to NCF2/P67PHOX. The extracellular functions involve pro-inflammatory, antimicrobial, oxidant-scavenging and apoptosis-inducing activities. Its pro-inflammatory activity includes recruitment of leukocytes, promotion of cytokine and chemokine production, and regulation of leukocyte adhesion and migration. Acts as an alarmin or a danger associated molecular pattern (DAMP) molecule and stimulates innate immune cells via binding to pattern recognition receptors such as Toll-like receptor 4 (TLR4) and receptor for advanced glycation endproducts (AGER). Binding to TLR4 and AGER activates the MAP-kinase and NF-kappa-B signaling pathways resulting in the amplification of the pro-inflammatory cascade. Has antimicrobial activity towards bacteria and fungi and exerts its antimicrobial activity probably via chelation of Zn(2+) which is essential for microbial growth. Can induce cell death via autophagy and apoptosis and this occurs through the cross-talk of mitochondria and lysosomes via reactive oxygen species (ROS) and the process involves BNIP3. Can regulate neutrophil number and apoptosis by an anti-apoptotic effect; regulates cell survival via ITGAM/ITGB and TLR4 and a signaling mechanism involving MEK-ERK. Its role as an oxidant scavenger has a protective role in preventing exaggerated tissue damage by scavenging oxidants. The iNOS-S100A8/A9 transnitrosylase complex is proposed to direct selective inflammatory stimulus-dependent S-nitrosylation of multiple targets such as GAPDH, NXA5, EZR, MSN and VIM by recognizing a [IL]-x-C-x-x-[DE] motif. The chain is Protein S100-A9 (S100A9) from Oryctolagus cuniculus (Rabbit).